The following is a 323-amino-acid chain: Arginase-1 (323 aa).

Residues 1 to 27 (MSSKPKSLEIIGAPFSKGQPRGGVEKG) are disordered. Serine 7 carries the phosphoserine modification. An N6-succinyllysine modification is found at lysine 17. Residues serine 62 and serine 72 each carry the phosphoserine modification. N6-succinyllysine is present on lysine 75. Mn(2+) is bound by residues histidine 101, aspartate 124, histidine 126, and aspartate 128. Residues 126-130 (HTDIN) and 137-139 (SGN) each bind substrate. Position 163 is a phosphoserine (serine 163). Aspartate 183 lines the substrate pocket. Serine 217 bears the Phosphoserine mark. Mn(2+) contacts are provided by aspartate 232 and aspartate 234. The substrate site is built by threonine 246 and glutamate 277. Phosphothreonine is present on threonine 281.

It belongs to the arginase family. As to quaternary structure, homotrimer. Interacts with CMTM6. Mn(2+) serves as cofactor. Expressed in macrophages. Expressed in precursor and mature group 2 innate lymphoid cells (ILC2s). Expressed in lung tumor-associated myeloid cells. Expressed in lung tumor-infiltrating dendritic cells.

Its subcellular location is the cytoplasm. It is found in the cytoplasmic granule. It carries out the reaction L-arginine + H2O = urea + L-ornithine. The protein operates within nitrogen metabolism; urea cycle; L-ornithine and urea from L-arginine: step 1/1. In terms of biological role, key element of the urea cycle converting L-arginine to urea and L-ornithine, which is further metabolized into metabolites proline and polyamides that drive collagen synthesis and bioenergetic pathways critical for cell proliferation, respectively; the urea cycle takes place primarily in the liver and, to a lesser extent, in the kidneys. Functionally, functions in L-arginine homeostasis in nonhepatic tissues characterized by the competition between nitric oxide synthase (NOS) and arginase for the available intracellular substrate arginine. Arginine metabolism is a critical regulator of innate and adaptive immune responses. Involved in an antimicrobial effector pathway in polymorphonuclear granulocytes (PMN). Upon PMN cell death is liberated from the phagolysosome and depletes arginine in the microenvironment leading to suppressed T cell and natural killer (NK) cell proliferation and cytokine secretion. In group 2 innate lymphoid cells (ILC2s) promotes acute type 2 inflammation in the lung and is involved in optimal ILC2 proliferation but not survival. Plays a role in the immune response of alternatively activated or M2 macrophages in processes such as wound healing and tissue regeneration, immune defense against multicellular pathogens and parasites, and immune suppression and allergic inflammation; the regulatory outcome seems to be organ specific. In tumor-infiltrating dendritic cells (DCs) and myeloid-derived suppressor cells (MDSCs) plays a role in suppression of T cell-mediated antitumor immunity. The chain is Arginase-1 (Arg1) from Mus musculus (Mouse).